The chain runs to 334 residues: Glycerol-3-phosphate dehydrogenase [NAD(P)+] (334 aa).

4 residues coordinate NADPH: Ser11, Trp12, Arg32, and Lys106. 2 residues coordinate sn-glycerol 3-phosphate: Lys106 and Gly136. Ala140 provides a ligand contact to NADPH. Lys191, Asp244, Ser254, Arg255, and Asn256 together coordinate sn-glycerol 3-phosphate. Lys191 serves as the catalytic Proton acceptor. Arg255 provides a ligand contact to NADPH. NADPH is bound by residues Val279 and Glu281.

Belongs to the NAD-dependent glycerol-3-phosphate dehydrogenase family.

It is found in the cytoplasm. The catalysed reaction is sn-glycerol 3-phosphate + NAD(+) = dihydroxyacetone phosphate + NADH + H(+). The enzyme catalyses sn-glycerol 3-phosphate + NADP(+) = dihydroxyacetone phosphate + NADPH + H(+). It participates in membrane lipid metabolism; glycerophospholipid metabolism. Functionally, catalyzes the reduction of the glycolytic intermediate dihydroxyacetone phosphate (DHAP) to sn-glycerol 3-phosphate (G3P), the key precursor for phospholipid synthesis. The sequence is that of Glycerol-3-phosphate dehydrogenase [NAD(P)+] from Parafrankia sp. (strain EAN1pec).